The chain runs to 153 residues: UPF0756 membrane protein LSEI_1366 (153 aa).

The next 4 membrane-spanning stretches (helical) occupy residues 4–24 (WLFLLGILAIAIVGKNKSLII), 52–72 (WGVTVISAAIMVPIATGEIGF), 85–105 (WIAIGCGVLVAVLSAKGVGLL), and 115–135 (LVFGTIIGVVFLKGIAAGPVI).

This sequence belongs to the UPF0756 family.

Its subcellular location is the cell membrane. The protein is UPF0756 membrane protein LSEI_1366 of Lacticaseibacillus paracasei (strain ATCC 334 / BCRC 17002 / CCUG 31169 / CIP 107868 / KCTC 3260 / NRRL B-441) (Lactobacillus paracasei).